Here is a 61-residue protein sequence, read N- to C-terminus: Putative antitoxin RelB2 (61 aa).

Antitoxin component of a type II toxin-antitoxin (TA) system. Its cognate toxin is RelE2 (Potential). This Methanocaldococcus jannaschii (strain ATCC 43067 / DSM 2661 / JAL-1 / JCM 10045 / NBRC 100440) (Methanococcus jannaschii) protein is Putative antitoxin RelB2 (relB2).